The following is a 366-amino-acid chain: Histidinol-phosphate aminotransferase (366 aa).

Lysine 222 is modified (N6-(pyridoxal phosphate)lysine).

This sequence belongs to the class-II pyridoxal-phosphate-dependent aminotransferase family. Histidinol-phosphate aminotransferase subfamily. In terms of assembly, homodimer. Pyridoxal 5'-phosphate is required as a cofactor.

The enzyme catalyses L-histidinol phosphate + 2-oxoglutarate = 3-(imidazol-4-yl)-2-oxopropyl phosphate + L-glutamate. It functions in the pathway amino-acid biosynthesis; L-histidine biosynthesis; L-histidine from 5-phospho-alpha-D-ribose 1-diphosphate: step 7/9. The protein is Histidinol-phosphate aminotransferase of Lysinibacillus sphaericus (strain C3-41).